Here is a 124-residue protein sequence, read N- to C-terminus: Thioredoxin domain-containing protein C21C3.12c (124 aa).

Positions 37-124 constitute a Thioredoxin domain; sequence PWCPTVRAAL…ANKFSKFIDI (88 aa). Cys-39 serves as the catalytic Nucleophile.

It belongs to the thioredoxin family.

The protein localises to the cytoplasm. The protein resides in the nucleus. The polypeptide is Thioredoxin domain-containing protein C21C3.12c (Schizosaccharomyces pombe (strain 972 / ATCC 24843) (Fission yeast)).